Here is a 347-residue protein sequence, read N- to C-terminus: Ferrochelatase (347 aa).

2 residues coordinate Fe cation: His193 and Glu273.

The protein belongs to the ferrochelatase family.

It is found in the cytoplasm. The enzyme catalyses heme b + 2 H(+) = protoporphyrin IX + Fe(2+). It functions in the pathway porphyrin-containing compound metabolism; protoheme biosynthesis; protoheme from protoporphyrin-IX: step 1/1. Catalyzes the ferrous insertion into protoporphyrin IX. This Rickettsia canadensis (strain McKiel) protein is Ferrochelatase.